A 1602-amino-acid chain; its full sequence is Calmodulin-regulated spectrin-associated protein 1 (1602 aa).

Residues 216-331 (ESPAHQKVRY…FIAELFWWFE (116 aa)) enclose the Calponin-homology (CH) domain. Phosphoserine occurs at positions 217, 371, 375, 416, and 431. The disordered stretch occupies residues 426–471 (QKQQKSIQGEDIPDQRHRSNSLTRVDGQPRGAAIAWPEKKTRPASQ). A Phosphothreonine modification is found at threonine 512. 3 positions are modified to phosphoserine: serine 563, serine 575, and serine 589. Basic and acidic residues predominate over residues 603–620 (AKEKQVITKEDERGEGRP). Residues 603 to 637 (AKEKQVITKEDERGEGRPRSIVSRRPSEGPQPLVR) are disordered. Residues serine 629, serine 722, serine 728, serine 738, and serine 740 each carry the phosphoserine modification. The span at 772–789 (KLQEDMKVKEHEDKDDAS) shows a compositional bias: basic and acidic residues. Disordered stretches follow at residues 772-808 (KLQE…VSMA) and 825-870 (LNSC…GKDP). Low complexity-rich tracts occupy residues 797–808 (STASQMSSVSMA) and 830–841 (TKSSTSSSQKTT). The segment covering 857–869 (QKREQSPSQHGKD) has biased composition (basic and acidic residues). Positions 871–892 (ASLLASELVQLHMQLEEKRRAI) are sufficient for interaction with SPTBN1. 2 coiled-coil regions span residues 873-909 (LLAS…QRLK) and 1016-1048 (DVNE…QEQL). The sufficient for interaction with calmodulin stretch occupies residues 903 to 922 (SARQRLKLGKAAFLHVVKKG). 3 disordered regions span residues 1075-1165 (FVEP…GKCL), 1206-1226 (KEVG…VEEP), and 1301-1448 (ARVR…DWET). Phosphoserine is present on serine 1080. Over residues 1103-1114 (RPAELKVPKDRP) the composition is skewed to basic and acidic residues. The segment covering 1115-1127 (QGSSRSKTPTPSV) has biased composition (polar residues). Residues 1206–1220 (KEVGSSSSDVSGKES) show a composition bias toward low complexity. Positions 1291–1343 (LLKQQRKAEEARVRKQQLEAEVELKRDEARRKAEEDRVRKEEEKARRELIKQE) form a coiled coil. A compositionally biased stretch (basic and acidic residues) spans 1301–1346 (ARVRKQQLEAEVELKRDEARRKAEEDRVRKEEEKARRELIKQEYLR). The span at 1361-1372 (PKSKPKKPRPKS) shows a compositional bias: basic residues. Residues 1380–1392 (SDSGTKCSSTPDN) show a composition bias toward polar residues. The segment covering 1393–1410 (LSRTQSGSSLSLASAATT) has biased composition (low complexity). Serine 1398 and serine 1427 each carry phosphoserine. The region spanning 1463–1597 (GPKLFKEPSS…QPKRPAVPKK (135 aa)) is the CKK domain. At tyrosine 1537 the chain carries Phosphotyrosine.

The protein belongs to the CAMSAP1 family. Interacts with spectrin via SPTBN1; the interaction is direct. Interacts with calmodulin; calcium-dependent it prevents interaction with spectrin.

It is found in the cytoplasm. The protein resides in the cytoskeleton. Its function is as follows. Key microtubule-organizing protein that specifically binds the minus-end of non-centrosomal microtubules and regulates their dynamics and organization. Specifically recognizes growing microtubule minus-ends and stabilizes microtubules. Acts on free microtubule minus-ends that are not capped by microtubule-nucleating proteins or other factors and protects microtubule minus-ends from depolymerization. In contrast to CAMSAP2 and CAMSAP3, tracks along the growing tips of minus-end microtubules without significantly affecting the polymerization rate: binds at the very tip of the microtubules minus-end and acts as a minus-end tracking protein (-TIP) that dissociates from microtubules after allowing tubulin incorporation. Through interaction with spectrin may regulate neurite outgrowth. This is Calmodulin-regulated spectrin-associated protein 1 (CAMSAP1) from Homo sapiens (Human).